The following is a 242-amino-acid chain: NAD-dependent protein deacetylase (242 aa).

The Deacetylase sirtuin-type domain occupies 1-242 (MQQFEEVRTI…EFVEGLSSIK (242 aa)). The NAD(+) site is built by Ala-23, Thr-27, Phe-34, Arg-35, Gln-102, Ile-104, Asp-105, and His-120. Residue Phe-34 participates in nicotinamide binding. Nicotinamide is bound by residues Ile-104 and Asp-105. The Proton acceptor role is filled by His-120. Residues Cys-128, Cys-131, Cys-148, and Cys-151 each coordinate Zn(2+). NAD(+) is bound by residues Thr-187, Ser-188, Asn-213, and Ile-231.

Belongs to the sirtuin family. Class U subfamily. Zn(2+) serves as cofactor.

The protein resides in the cytoplasm. The catalysed reaction is N(6)-acetyl-L-lysyl-[protein] + NAD(+) + H2O = 2''-O-acetyl-ADP-D-ribose + nicotinamide + L-lysyl-[protein]. In terms of biological role, NAD-dependent protein deacetylase which modulates the activities of several enzymes which are inactive in their acetylated form. The sequence is that of NAD-dependent protein deacetylase from Bacillus anthracis.